A 449-amino-acid polypeptide reads, in one-letter code: UDP-glycosyltransferase 76E6 (449 aa).

UDP-alpha-D-glucose contacts are provided by residues S274, 333-335, 350-358, and 372-375; these read APQ, HCGWNSTLE, and HGEQ.

It belongs to the UDP-glycosyltransferase family.

The protein is UDP-glycosyltransferase 76E6 (UGT76E6) of Arabidopsis thaliana (Mouse-ear cress).